Reading from the N-terminus, the 397-residue chain is Tryptophan synthase beta chain (397 aa).

Lysine 87 carries the post-translational modification N6-(pyridoxal phosphate)lysine.

The protein belongs to the TrpB family. Tetramer of two alpha and two beta chains. It depends on pyridoxal 5'-phosphate as a cofactor.

It carries out the reaction (1S,2R)-1-C-(indol-3-yl)glycerol 3-phosphate + L-serine = D-glyceraldehyde 3-phosphate + L-tryptophan + H2O. The protein operates within amino-acid biosynthesis; L-tryptophan biosynthesis; L-tryptophan from chorismate: step 5/5. Functionally, the beta subunit is responsible for the synthesis of L-tryptophan from indole and L-serine. This is Tryptophan synthase beta chain from Escherichia fergusonii (strain ATCC 35469 / DSM 13698 / CCUG 18766 / IAM 14443 / JCM 21226 / LMG 7866 / NBRC 102419 / NCTC 12128 / CDC 0568-73).